The chain runs to 559 residues: ATP synthase subunit beta-3, mitochondrial (559 aa).

Low complexity predominate over residues 1-28 (MASRRILSSLLRSSSSRSTSKSSLIGSR). The tract at residues 1–39 (MASRRILSSLLRSSSSRSTSKSSLIGSRNPRLLSPGPAH) is disordered. The N-terminal 54 residues, 1 to 54 (MASRRILSSLLRSSSSRSTSKSSLIGSRNPRLLSPGPAHGAAPCGTLLGRVAEY), are a transit peptide targeting the mitochondrion. Residue serine 62 is modified to Phosphoserine. Residue 234-241 (GGAGVGKT) coordinates ATP.

Belongs to the ATPase alpha/beta chains family. F-type ATPases have 2 components, CF(1) - the catalytic core - and CF(0) - the membrane proton channel. CF(1) has five subunits: alpha(3), beta(3), gamma(1), delta(1), epsilon(1). CF(0) has three main subunits: a, b and c.

It is found in the mitochondrion. The protein resides in the mitochondrion inner membrane. It carries out the reaction ATP + H2O + 4 H(+)(in) = ADP + phosphate + 5 H(+)(out). In terms of biological role, mitochondrial membrane ATP synthase (F(1)F(0) ATP synthase or Complex V) produces ATP from ADP in the presence of a proton gradient across the membrane which is generated by electron transport complexes of the respiratory chain. F-type ATPases consist of two structural domains, F(1) - containing the extramembraneous catalytic core, and F(0) - containing the membrane proton channel, linked together by a central stalk and a peripheral stalk. During catalysis, ATP synthesis in the catalytic domain of F(1) is coupled via a rotary mechanism of the central stalk subunits to proton translocation. Subunits alpha and beta form the catalytic core in F(1). Rotation of the central stalk against the surrounding alpha(3)beta(3) subunits leads to hydrolysis of ATP in three separate catalytic sites on the beta subunits. The protein is ATP synthase subunit beta-3, mitochondrial of Arabidopsis thaliana (Mouse-ear cress).